The primary structure comprises 172 residues: ATP synthase subunit b (172 aa).

Residues 12–32 (SLYIGDLVFYIVTFIILMLLV) traverse the membrane as a helical segment. Basic and acidic residues-rich tracts occupy residues 63 to 74 (ESAEKMAAKRQA) and 116 to 131 (AQKD…LNSA). The disordered stretch occupies residues 63 to 131 (ESAEKMAAKR…QARRDALNSA (69 aa)).

This sequence belongs to the ATPase B chain family. F-type ATPases have 2 components, F(1) - the catalytic core - and F(0) - the membrane proton channel. F(1) has five subunits: alpha(3), beta(3), gamma(1), delta(1), epsilon(1). F(0) has three main subunits: a(1), b(2) and c(10-14). The alpha and beta chains form an alternating ring which encloses part of the gamma chain. F(1) is attached to F(0) by a central stalk formed by the gamma and epsilon chains, while a peripheral stalk is formed by the delta and b chains.

It localises to the cell membrane. In terms of biological role, f(1)F(0) ATP synthase produces ATP from ADP in the presence of a proton or sodium gradient. F-type ATPases consist of two structural domains, F(1) containing the extramembraneous catalytic core and F(0) containing the membrane proton channel, linked together by a central stalk and a peripheral stalk. During catalysis, ATP synthesis in the catalytic domain of F(1) is coupled via a rotary mechanism of the central stalk subunits to proton translocation. Functionally, component of the F(0) channel, it forms part of the peripheral stalk, linking F(1) to F(0). The sequence is that of ATP synthase subunit b from Limosilactobacillus reuteri (strain DSM 20016) (Lactobacillus reuteri).